We begin with the raw amino-acid sequence, 457 residues long: Multidrug resistance protein MdtK (457 aa).

Residues 1–10 are Cytoplasmic-facing; the sequence is MQKYISEARL. The helical transmembrane segment at 11-31 threads the bilayer; sequence LLALAIPVILAQIAQTAMGFV. The Periplasmic segment spans residues 32–52; the sequence is DTVMAGGYSATDMAAVAIGTS. A helical transmembrane segment spans residues 53–73; the sequence is IWLPAILFGHGLLLALTPVIA. At 74 to 92 the chain is on the cytoplasmic side; sequence QLNGSGRRERIAHQVRQGF. Residues 93–113 traverse the membrane as a helical segment; sequence WLAGFVSVLIMLVLWNAGYII. The Periplasmic segment spans residues 114–126; that stretch reads RYMENIDPALADK. Residues 127-147 form a helical membrane-spanning segment; it reads AVGYLRALLWGAPGYLFFQVA. Residues 148 to 159 are Cytoplasmic-facing; it reads RNQCEGLAKAKP. The chain crosses the membrane as a helical span at residues 160–180; it reads GMVMGFIGLLVNIPVNYIFIY. Residues 181 to 188 lie on the Periplasmic side of the membrane; it reads GHFGMPEL. The chain crosses the membrane as a helical span at residues 189–209; the sequence is GGVGCGVATAAVYWVMFLAMV. The Cytoplasmic portion of the chain corresponds to 210–242; sequence SYIKRARSMRDIRNEKGTAKPEPAVMKRLIQLG. The helical transmembrane segment at 243–263 threads the bilayer; it reads LPIALALFLEVTLFAVVALLV. The Periplasmic portion of the chain corresponds to 264-275; the sequence is SPLGIVDVAGHQ. Residues 276–296 traverse the membrane as a helical segment; that stretch reads IALNFSSLMFVLPMSLAAAVT. The Cytoplasmic portion of the chain corresponds to 297–313; the sequence is IRVGYRLGQGSTLDAQT. A helical transmembrane segment spans residues 314 to 334; sequence AARTGLMVGVCMATLTAIFTV. The Periplasmic portion of the chain corresponds to 335-349; it reads SLREQIALLYNDNPE. The chain crosses the membrane as a helical span at residues 350-370; that stretch reads VVTLAAHLMLLAAVYQISDSI. At 371–386 the chain is on the cytoplasmic side; the sequence is QVIGSGILRGYKDTRS. Residues 387 to 407 traverse the membrane as a helical segment; that stretch reads IFYITFTAYWVLGLPSGYILA. Over 408–417 the chain is Periplasmic; that stretch reads LTDLVVEPMG. A helical membrane pass occupies residues 418 to 438; sequence PAGFWIGFIIGLTSAAIMMML. The Cytoplasmic portion of the chain corresponds to 439 to 457; it reads RMRFLQRMPSAIILQRASR.

This sequence belongs to the multi antimicrobial extrusion (MATE) (TC 2.A.66.1) family. MdtK subfamily.

It is found in the cell inner membrane. Functionally, multidrug efflux pump that functions probably as a Na(+)/drug antiporter. This Shigella flexneri serotype 5b (strain 8401) protein is Multidrug resistance protein MdtK.